Reading from the N-terminus, the 582-residue chain is MANQIDESKPISDLEIMRHSAAHIMAEAVLSMFPEAKLGIGPAIDTGFYYDFDLPRTLTPEDLPEIETRMNQLVKSNLPFRREEMSKDEARKLFANQPYKLELLNDITDETVSIYRQGNFCDLCRGPHVNYTSKVKAFKLLSIAGAYWRGDEKRPMLQRIYGAAFLDKASLAEYLNMLEEAAKRDHRKLGKELELFSLHQEIGGGLVNWLPNGAIVRHLIEEFWKKEHLKRGYDLVYTPHIAKVDLWKTSGHWGFYRENMYSPMDIDGEEYVLKPMNCVYHILMFKNRTRSYKELPIRMAELGTVYRYERSGVLHGLSRVRGFTQDDAHIFCLYDQLEKEVVKVLDLAKFMIDTFGFTKYKVMLSTRPEKYVGELDKWEYATDILAKALEANQIPYQVDPGEGVFYGPKIDIKFEDALGRTWQGPTIQVDFQLPERFDVSVVGEDGKDQPVAMVHRTVLGSMERFMSCLTEQYGGAFPAWLSPKQVMVIPIADRHTEFAEKLACELREEEVRVEVDSRSETMNQKIRQAQLAKIPYMLVVGDKEIETQSVAVRTRTGSQQVMPFAEFKSMLLAKIKTKSTEI.

Positions 185–478 (DHRKLGKELE…LTEQYGGAFP (294 aa)) are catalytic. Zn(2+) is bound by residues C278, H329, and H455.

It belongs to the class-II aminoacyl-tRNA synthetase family. Homodimer. The cofactor is Zn(2+).

The protein resides in the cytoplasm. The catalysed reaction is tRNA(Thr) + L-threonine + ATP = L-threonyl-tRNA(Thr) + AMP + diphosphate + H(+). Catalyzes the attachment of threonine to tRNA(Thr) in a two-step reaction: L-threonine is first activated by ATP to form Thr-AMP and then transferred to the acceptor end of tRNA(Thr). Also edits incorrectly charged L-seryl-tRNA(Thr). The chain is Threonine--tRNA ligase from Dehalococcoides mccartyi (strain CBDB1).